The following is a 54-amino-acid chain: MLQYALVFFVIALIAAVFGFGGIAAGAVEIAKILFFIFLIVALVTAVMGLVRRR.

Helical transmembrane passes span 5 to 25 (ALVF…GIAA) and 30 to 50 (IAKI…VMGL).

Belongs to the UPF0391 family.

The protein localises to the cell membrane. In Cupriavidus pinatubonensis (strain JMP 134 / LMG 1197) (Cupriavidus necator (strain JMP 134)), this protein is UPF0391 membrane protein Reut_A0124.